The primary structure comprises 344 residues: Prickle-like protein 4 (344 aa).

Positions 1-81 (MSPQGPAVLS…ARLVLPKLEG (81 aa)) constitute a PET domain. LIM zinc-binding domains follow at residues 82–147 (HTCE…LLRP) and 148–207 (RCPA…RYSD). The interval 253–344 (GSSLQTQRGL…NASKTHCTMC (92 aa)) is disordered. Positions 257-271 (QTQRGLPGSSPQQEN) are enriched in polar residues. The span at 272–296 (RPGDKAEAPKGQEQCRLETIRDPKD) shows a compositional bias: basic and acidic residues. Polar residues predominate over residues 322–344 (SWKTPGSLQAEDSNASKTHCTMC).

It belongs to the prickle / espinas / testin family. As to expression, expressed in a broad range of normal tissues as well as in hepatocellular carcinoma, breast cancer and prostate cancer tissues.

This chain is Prickle-like protein 4 (PRICKLE4), found in Homo sapiens (Human).